Reading from the N-terminus, the 254-residue chain is 14-3-3-like protein RA215 (254 aa).

The protein belongs to the 14-3-3 family.

This Solanum tuberosum (Potato) protein is 14-3-3-like protein RA215.